The following is a 299-amino-acid chain: MEHFDASLSTYFKALLGPRDTRVKGWFLLDNYIPTFICSVIYLLIVWLGPKYMRNKQPFSCRGILVVYNLGLTLLSLYMFCELVTGVWEGKYNFFCQGTRTAGESDMKIIRVLRWYYFSKLIEFMDTFFFILRKNNHQITVLHVYHHASMLNIWWFVMNWVPCGHSYFGATLNSFIHVLMYSYYGLSSVPSMRPYLWWKKYITQGQLLQFVLTIIQTSCGVIWPCTFPLGWLYFQIGYMISLIALFTNFYIQTYNKKGASRRKDHLKDHQNGSVAAVNGHTNSFSPLENNVKPRKLRKD.

Position 1 is an N-acetylmethionine (Met-1). The next 6 membrane-spanning stretches (helical) occupy residues 26-46 (WFLL…LLIV), 64-84 (ILVV…CELV), 112-132 (VLRW…FFIL), 150-170 (MLNI…YFGA), 205-225 (GQLL…IWPC), and 226-246 (TFPL…IALF). Positions 275 to 299 (AAVNGHTNSFSPLENNVKPRKLRKD) are disordered. Positions 279-288 (GHTNSFSPLE) are enriched in polar residues. Residue Ser-285 is modified to Phosphoserine.

It belongs to the ELO family. ELOVL5 subfamily. Interacts with TECR.

The protein resides in the endoplasmic reticulum membrane. It is found in the cell projection. The protein localises to the dendrite. It catalyses the reaction a very-long-chain acyl-CoA + malonyl-CoA + H(+) = a very-long-chain 3-oxoacyl-CoA + CO2 + CoA. It carries out the reaction (6Z,9Z,12Z)-octadecatrienoyl-CoA + malonyl-CoA + H(+) = (8Z,11Z,14Z)-3-oxoeicosatrienoyl-CoA + CO2 + CoA. The enzyme catalyses (9Z,12Z,15Z)-octadecatrienoyl-CoA + malonyl-CoA + H(+) = (11Z,14Z,17Z)-3-oxoeicosatrienoyl-CoA + CO2 + CoA. The catalysed reaction is (9Z)-hexadecenoyl-CoA + malonyl-CoA + H(+) = 3-oxo-(11Z)-octadecenoyl-CoA + CO2 + CoA. It catalyses the reaction (9Z)-octadecenoyl-CoA + malonyl-CoA + H(+) = 3-oxo-(11Z)-eicosenoyl-CoA + CO2 + CoA. It carries out the reaction (11Z)-octadecenoyl-CoA + malonyl-CoA + H(+) = 3-oxo-(13Z)-eicosenoyl-CoA + CO2 + CoA. The enzyme catalyses (9Z,12Z)-octadecadienoyl-CoA + malonyl-CoA + H(+) = (11Z,14Z)-3-oxoicosa-11,14-dienoyl-CoA + CO2 + CoA. The catalysed reaction is (6Z,9Z,12Z,15Z)-octadecatetraenoyl-CoA + malonyl-CoA + H(+) = (8Z,11Z,14Z,17Z)-3-oxoicosatetraenoyl-CoA + CO2 + CoA. It catalyses the reaction (5Z,8Z,11Z,14Z)-eicosatetraenoyl-CoA + malonyl-CoA + H(+) = (7Z,10Z,13Z,16Z)-3-oxodocosatetraenoyl-CoA + CO2 + CoA. It carries out the reaction (5Z,8Z,11Z,14Z,17Z)-eicosapentaenoyl-CoA + malonyl-CoA + H(+) = 3-oxo-(7Z,10Z,13Z,16Z,19Z)-docosapentaenoyl-CoA + CO2 + CoA. It participates in lipid metabolism; polyunsaturated fatty acid biosynthesis. Its function is as follows. Catalyzes the first and rate-limiting reaction of the four reactions that constitute the long-chain fatty acids elongation cycle. This endoplasmic reticulum-bound enzymatic process allows the addition of 2 carbons to the chain of long- and very long-chain fatty acids (VLCFAs) per cycle. Condensing enzyme that acts specifically toward polyunsaturated acyl-CoA with the higher activity toward C18:3(n-6) acyl-CoA. May participate in the production of monounsaturated and of polyunsaturated VLCFAs of different chain lengths that are involved in multiple biological processes as precursors of membrane lipids and lipid mediators. In conditions where the essential linoleic and alpha linoleic fatty acids are lacking it is also involved in the synthesis of Mead acid from oleic acid. In Macaca fascicularis (Crab-eating macaque), this protein is Very long chain fatty acid elongase 5.